The primary structure comprises 150 residues: Histone H2B.2 (150 aa).

2 stretches are compositionally biased toward basic and acidic residues: residues 1-21 (MAPK…KAGE) and 33-49 (EKRL…EGKK). The tract at residues 1–58 (MAPKAEKKPAEKKPAEEKAGEKAPAAGKKPKAEKRLPASKGEKGGEGKKERGRKKAKK) is disordered. Lys7 and Lys34 each carry N6-acetyllysine. Lys146 participates in a covalent cross-link: Glycyl lysine isopeptide (Lys-Gly) (interchain with G-Cter in ubiquitin).

This sequence belongs to the histone H2B family. As to quaternary structure, the nucleosome is a histone octamer containing two molecules each of H2A, H2B, H3 and H4 assembled in one H3-H4 heterotetramer and two H2A-H2B heterodimers. The octamer wraps approximately 147 bp of DNA. Can be acetylated to form H2BK6ac and H2BK33ac. In terms of processing, monoubiquitinated by BRE1 to form H2BK143ub1 and deubiquitinated by UBP26. Required for heterochromatic histone H3 di- and trimethylation at H3K4me. May give a specific tag for epigenetic transcriptional activation.

It localises to the nucleus. The protein resides in the chromosome. Core component of nucleosome. Nucleosomes wrap and compact DNA into chromatin, limiting DNA accessibility to the cellular machineries which require DNA as a template. Histones thereby play a central role in transcription regulation, DNA repair, DNA replication and chromosomal stability. DNA accessibility is regulated via a complex set of post-translational modifications of histones, also called histone code, and nucleosome remodeling. This chain is Histone H2B.2 (H2B.2), found in Oryza sativa subsp. indica (Rice).